Consider the following 280-residue polypeptide: Four and a half LIM domains protein 3 (280 aa).

The residue at position 2 (Ser2) is an N-acetylserine. Residues 7 to 31 (CAKCNESLYGRKYIQTDSGPYCVPC) form a C4-type zinc finger. 2 consecutive LIM zinc-binding domains span residues 40–92 (CAEC…CNDC) and 101–153 (CSAC…CVPC). Lys157 is modified (N6-acetyllysine). 2 consecutive LIM zinc-binding domains span residues 162–212 (CARC…CVAC) and 221–275 (CSSC…CQGC). The residue at position 235 (Lys235) is an N6-acetyllysine.

In terms of assembly, interacts with SOX15; the interaction recruits FHL3 to FOXK1 promoters where it acts as a transcriptional coactivator of FOXK1. In terms of tissue distribution, expressed only in skeletal muscle.

The protein localises to the nucleus. Its subcellular location is the cytoplasm. Functionally, recruited by SOX15 to FOXK1 promoters where it acts as a transcriptional coactivator of FOXK1. This chain is Four and a half LIM domains protein 3 (FHL3), found in Homo sapiens (Human).